The chain runs to 126 residues: Aspartate 1-decarboxylase 2 (126 aa).

Residue Ser25 is the Schiff-base intermediate with substrate; via pyruvic acid of the active site. Ser25 is modified (pyruvic acid (Ser)). Residue Thr57 coordinates substrate. Residue Tyr58 is the Proton donor of the active site. 73–75 (GSA) is a substrate binding site.

This sequence belongs to the PanD family. As to quaternary structure, heterooctamer of four alpha and four beta subunits. The cofactor is pyruvate. In terms of processing, is synthesized initially as an inactive proenzyme, which is activated by self-cleavage at a specific serine bond to produce a beta-subunit with a hydroxyl group at its C-terminus and an alpha-subunit with a pyruvoyl group at its N-terminus.

It localises to the cytoplasm. It carries out the reaction L-aspartate + H(+) = beta-alanine + CO2. Its pathway is cofactor biosynthesis; (R)-pantothenate biosynthesis; beta-alanine from L-aspartate: step 1/1. Its function is as follows. Catalyzes the pyruvoyl-dependent decarboxylation of aspartate to produce beta-alanine. This Polaromonas sp. (strain JS666 / ATCC BAA-500) protein is Aspartate 1-decarboxylase 2.